An 81-amino-acid polypeptide reads, in one-letter code: ATP synthase subunit c, chloroplastic (81 aa).

Helical transmembrane passes span 7-27 (AASV…PGIG) and 57-77 (LAFM…LLFA).

It belongs to the ATPase C chain family. F-type ATPases have 2 components, F(1) - the catalytic core - and F(0) - the membrane proton channel. F(1) has five subunits: alpha(3), beta(3), gamma(1), delta(1), epsilon(1). F(0) has four main subunits: a(1), b(1), b'(1) and c(10-14). The alpha and beta chains form an alternating ring which encloses part of the gamma chain. F(1) is attached to F(0) by a central stalk formed by the gamma and epsilon chains, while a peripheral stalk is formed by the delta, b and b' chains.

The protein localises to the plastid. It is found in the chloroplast thylakoid membrane. Functionally, f(1)F(0) ATP synthase produces ATP from ADP in the presence of a proton or sodium gradient. F-type ATPases consist of two structural domains, F(1) containing the extramembraneous catalytic core and F(0) containing the membrane proton channel, linked together by a central stalk and a peripheral stalk. During catalysis, ATP synthesis in the catalytic domain of F(1) is coupled via a rotary mechanism of the central stalk subunits to proton translocation. Key component of the F(0) channel; it plays a direct role in translocation across the membrane. A homomeric c-ring of between 10-14 subunits forms the central stalk rotor element with the F(1) delta and epsilon subunits. This is ATP synthase subunit c, chloroplastic from Cryptomeria japonica (Japanese cedar).